The primary structure comprises 131 residues: Translation initiation factor 5A (131 aa).

Lysine 37 bears the Hypusine mark.

This sequence belongs to the eIF-5A family.

It is found in the cytoplasm. In terms of biological role, functions by promoting the formation of the first peptide bond. The chain is Translation initiation factor 5A (eIF5A) from Methanococcus maripaludis (strain C7 / ATCC BAA-1331).